Reading from the N-terminus, the 426-residue chain is MLDNQLLRENPQYVATQLLKRGFQFDAVTFSQLEEKRKALQVSTQSLQNERNLRSKAIGEAKSRGENIEPMREEVNKLGAKLEQQKTELDEILKQIEVISLSLPNIPHESVPVGKDELDNQEIRKWGDVPAFSFPVKSHDELGEALGQMDFALAAKITGSRFVVMKGHLARLHRALIQFMLDIHIQQHGYQEIYVPYIVNADSLLGTGQLPKFEADLFKLTGDNGYYLTSTSEIPVTNTVREMILSAEQLPIRYVCHSPCFRSEAGSYGKDTKGMIRQHQFEKVELVWITKPEDSYNALEQLTQHAEVILQRLKLPYRVVALCTGDIGAGSAKTYDLEVWLPSQNTYREISSCSNMEAFQARRMKARFRNPDTNEIQLVHTLNGSGLAVGRTLVAIMENYQDEHGNIHIPDALKPYLGGIDIISVK.

Thr-231–Glu-233 contributes to the L-serine binding site. Arg-262–Glu-264 contributes to the ATP binding site. Glu-285 is a binding site for L-serine. Glu-349–Ser-352 contacts ATP. Residue Ser-385 participates in L-serine binding.

Belongs to the class-II aminoacyl-tRNA synthetase family. Type-1 seryl-tRNA synthetase subfamily. In terms of assembly, homodimer. The tRNA molecule binds across the dimer.

Its subcellular location is the cytoplasm. The catalysed reaction is tRNA(Ser) + L-serine + ATP = L-seryl-tRNA(Ser) + AMP + diphosphate + H(+). It catalyses the reaction tRNA(Sec) + L-serine + ATP = L-seryl-tRNA(Sec) + AMP + diphosphate + H(+). It functions in the pathway aminoacyl-tRNA biosynthesis; selenocysteinyl-tRNA(Sec) biosynthesis; L-seryl-tRNA(Sec) from L-serine and tRNA(Sec): step 1/1. In terms of biological role, catalyzes the attachment of serine to tRNA(Ser). Is also able to aminoacylate tRNA(Sec) with serine, to form the misacylated tRNA L-seryl-tRNA(Sec), which will be further converted into selenocysteinyl-tRNA(Sec). This chain is Serine--tRNA ligase, found in Legionella pneumophila (strain Lens).